Here is a 146-residue protein sequence, read N- to C-terminus: Large-conductance mechanosensitive channel (146 aa).

The next 3 helical transmembrane spans lie at 21–41 (VGIIIGAAFTGIVSSLVADLI), 44–64 (IIGLITGGIDFSNLFVNLGDG), and 83–103 (GSFITAVINFLIIAWVVFLLV).

Belongs to the MscL family. As to quaternary structure, homopentamer.

The protein localises to the cell inner membrane. Functionally, channel that opens in response to stretch forces in the membrane lipid bilayer. May participate in the regulation of osmotic pressure changes within the cell. This chain is Large-conductance mechanosensitive channel, found in Cereibacter sphaeroides (strain ATCC 17023 / DSM 158 / JCM 6121 / CCUG 31486 / LMG 2827 / NBRC 12203 / NCIMB 8253 / ATH 2.4.1.) (Rhodobacter sphaeroides).